The primary structure comprises 211 residues: Large ribosomal subunit protein uL3 (211 aa).

This sequence belongs to the universal ribosomal protein uL3 family. In terms of assembly, part of the 50S ribosomal subunit. Forms a cluster with proteins L14 and L19.

One of the primary rRNA binding proteins, it binds directly near the 3'-end of the 23S rRNA, where it nucleates assembly of the 50S subunit. The chain is Large ribosomal subunit protein uL3 from Desulfatibacillum aliphaticivorans.